A 165-amino-acid chain; its full sequence is Endoribonuclease YbeY (165 aa).

Zn(2+) is bound by residues histidine 131, histidine 135, and histidine 141.

It belongs to the endoribonuclease YbeY family. The cofactor is Zn(2+).

Its subcellular location is the cytoplasm. In terms of biological role, single strand-specific metallo-endoribonuclease involved in late-stage 70S ribosome quality control and in maturation of the 3' terminus of the 16S rRNA. The chain is Endoribonuclease YbeY from Agathobacter rectalis (strain ATCC 33656 / DSM 3377 / JCM 17463 / KCTC 5835 / VPI 0990) (Eubacterium rectale).